The sequence spans 265 residues: U6 snRNA phosphodiesterase 1 (265 aa).

The disordered stretch occupies residues 1–72 (MSAAPLVGYS…DSTKHGGRVR (72 aa)). A compositionally biased stretch (basic and acidic residues) spans 20–31 (DGMRTRPGDGSH). Catalysis depends on H120, which acts as the Proton acceptor. Residue 120-122 (HLS) participates in AMP binding. Residues Q164, Y202, and 206–210 (SFHLS) contribute to the UMP site. AMP is bound by residues Y202 and 204–210 (DPSFHLS). The active-site Proton donor is the H208.

The protein belongs to the 2H phosphoesterase superfamily. USB1 family. As to quaternary structure, interacts with PLRG1, CDC5L and PRPF19.

Its subcellular location is the nucleus. The enzyme catalyses a 3'-end uridylyl-uridine-RNA = a 3'-end 2',3'-cyclophospho-uridine-RNA + uridine. It catalyses the reaction a 3'-end uridylyl-adenosine-RNA = a 3'-end 2',3'-cyclophospho-uridine-RNA + adenosine. 3'-5' RNA exonuclease activity is inhibited by a 3' phosphate terminated RNA. In terms of biological role, 3'-5' RNA exonuclease that trims the 3' end of oligo(U) and oligo(A) tracts of the pre-U6 small nuclear RNA (snRNA) molecule, leading to the formation of a mature U6 snRNA 3' end-terminated with a 2',3'-cyclic phosphate. Participates in the U6 snRNA 3' end processing that prevents U6 snRNA degradation. In addition also removes uridines from the 3' end of U6atac snRNA and possibly the vault RNA VTRNA1-1. This is U6 snRNA phosphodiesterase 1 from Homo sapiens (Human).